The sequence spans 452 residues: Ribosomal protein uS12 methylthiotransferase RimO (452 aa).

The 116-residue stretch at 8–123 (PRVGFVSLGC…VMQAVHTHLP (116 aa)) folds into the MTTase N-terminal domain. Residues cysteine 17, cysteine 53, cysteine 82, cysteine 154, cysteine 158, and cysteine 161 each coordinate [4Fe-4S] cluster. The Radical SAM core domain maps to 140–381 (LTPKHYAYLK…MEVAEEVSAR (242 aa)). The region spanning 384-452 (QRKVGQTLRV…ADGHDLWGEI (69 aa)) is the TRAM domain.

The protein belongs to the methylthiotransferase family. RimO subfamily. [4Fe-4S] cluster serves as cofactor.

The protein localises to the cytoplasm. The enzyme catalyses L-aspartate(89)-[ribosomal protein uS12]-hydrogen + (sulfur carrier)-SH + AH2 + 2 S-adenosyl-L-methionine = 3-methylsulfanyl-L-aspartate(89)-[ribosomal protein uS12]-hydrogen + (sulfur carrier)-H + 5'-deoxyadenosine + L-methionine + A + S-adenosyl-L-homocysteine + 2 H(+). Its function is as follows. Catalyzes the methylthiolation of an aspartic acid residue of ribosomal protein uS12. This chain is Ribosomal protein uS12 methylthiotransferase RimO, found in Cupriavidus pinatubonensis (strain JMP 134 / LMG 1197) (Cupriavidus necator (strain JMP 134)).